Reading from the N-terminus, the 629-residue chain is tRNA uridine 5-carboxymethylaminomethyl modification enzyme MnmG (629 aa).

Residues Gly18 to Gly23, Val130, and Ser188 each bind FAD. Gly280–Phe294 contributes to the NAD(+) binding site. Gln377 contacts FAD.

This sequence belongs to the MnmG family. In terms of assembly, homodimer. Heterotetramer of two MnmE and two MnmG subunits. FAD is required as a cofactor.

It is found in the cytoplasm. NAD-binding protein involved in the addition of a carboxymethylaminomethyl (cmnm) group at the wobble position (U34) of certain tRNAs, forming tRNA-cmnm(5)s(2)U34. The polypeptide is tRNA uridine 5-carboxymethylaminomethyl modification enzyme MnmG (Granulibacter bethesdensis (strain ATCC BAA-1260 / CGDNIH1)).